A 127-amino-acid chain; its full sequence is Large ribosomal subunit protein bL17 (127 aa).

Belongs to the bacterial ribosomal protein bL17 family. Part of the 50S ribosomal subunit. Contacts protein L32.

The sequence is that of Large ribosomal subunit protein bL17 from Chromohalobacter salexigens (strain ATCC BAA-138 / DSM 3043 / CIP 106854 / NCIMB 13768 / 1H11).